The following is a 368-amino-acid chain: Histidinol-phosphate aminotransferase (368 aa).

Lysine 215 carries the post-translational modification N6-(pyridoxal phosphate)lysine.

This sequence belongs to the class-II pyridoxal-phosphate-dependent aminotransferase family. Histidinol-phosphate aminotransferase subfamily. Homodimer. The cofactor is pyridoxal 5'-phosphate.

It carries out the reaction L-histidinol phosphate + 2-oxoglutarate = 3-(imidazol-4-yl)-2-oxopropyl phosphate + L-glutamate. It functions in the pathway amino-acid biosynthesis; L-histidine biosynthesis; L-histidine from 5-phospho-alpha-D-ribose 1-diphosphate: step 7/9. The polypeptide is Histidinol-phosphate aminotransferase (hisC) (Buchnera aphidicola subsp. Acyrthosiphon pisum (strain APS) (Acyrthosiphon pisum symbiotic bacterium)).